Reading from the N-terminus, the 188-residue chain is Elongation factor P-like protein (188 aa).

Belongs to the elongation factor P family.

This Xylella fastidiosa (strain M12) protein is Elongation factor P-like protein.